The chain runs to 158 residues: Troponin C, isoform 1 (158 aa).

Serine 1 bears the N-acetylserine mark. 4 consecutive EF-hand domains span residues 15–50 (EQIVVLRRAFDSFDRDKKGYISPETVSDILRMMGIK), 51–86 (VSSTSFKQIIEEIDEDGSGQIEFSEFLQLAAKFLIE), 91–126 (AMMKELKEAFRLYDKEGNGYITTQTLKEILHELDAR), and 127–158 (LTAEELVGIIEEIDEDGSGTVDFDEFMAMMTG). Positions 64, 66, 68, 70, and 75 each coordinate Ca(2+). Ca(2+)-binding residues include aspartate 140, aspartate 142, serine 144, threonine 146, and glutamate 151.

Belongs to the troponin C family.

Functionally, troponin is the central regulatory protein of striated muscle contraction. Tn consists of three components: Tn-I which is the inhibitor of actomyosin ATPase, Tn-T which contains the binding site for tropomyosin and Tn-C. The binding of calcium to Tn-C abolishes the inhibitory action of Tn on actin filaments. This Balanus nubilus (Giant acorn barnacle) protein is Troponin C, isoform 1.